Consider the following 172-residue polypeptide: Translationally-controlled tumor protein homolog (172 aa).

The region spanning M1–C172 is the TCTP domain.

This sequence belongs to the TCTP family.

Its subcellular location is the cytoplasm. Functionally, involved in calcium binding and microtubule stabilization. This is Translationally-controlled tumor protein homolog from Drosophila yakuba (Fruit fly).